A 384-amino-acid chain; its full sequence is Lipid-A-disaccharide synthase (384 aa).

This sequence belongs to the LpxB family.

It carries out the reaction 2-N,3-O-bis[(3R)-3-hydroxytetradecanoyl]-alpha-D-glucosaminyl 1-phosphate + UDP-2-N,3-O-bis[(3R)-3-hydroxytetradecanoyl]-alpha-D-glucosamine = lipid A disaccharide (E. coli) + UDP + H(+). It catalyses the reaction a lipid X + a UDP-2-N,3-O-bis[(3R)-3-hydroxyacyl]-alpha-D-glucosamine = a lipid A disaccharide + UDP + H(+). It participates in glycolipid biosynthesis; lipid IV(A) biosynthesis; lipid IV(A) from (3R)-3-hydroxytetradecanoyl-[acyl-carrier-protein] and UDP-N-acetyl-alpha-D-glucosamine: step 5/6. Functionally, condensation of UDP-2,3-diacylglucosamine and 2,3-diacylglucosamine-1-phosphate to form lipid A disaccharide, a precursor of lipid A, a phosphorylated glycolipid that anchors the lipopolysaccharide to the outer membrane of the cell. This is Lipid-A-disaccharide synthase from Blochmanniella floridana.